Reading from the N-terminus, the 240-residue chain is MSDRLKERKRTPVSHKVIEKRRRDRINRCLNELGKTVPMALAKQSSGKLEKAEILEMTVQYLRALHSADFPRGREKELLAEFANYFHYGYHECMKNLVHYLTTVERMETKDTKYARILAFLQSKARLGAEPTFPPLSLPEPDFSYQLHAASPEFPGHSPGEATMFPQGATPGSFPWPPGAARSPALPYLSSATVPLPSPAQQHSPFLAPMQGLDRHYLNLIGHGHPNGLNLHTPQHPPVL.

One can recognise a bHLH domain in the interval R10–L65. Position 48 is an N6-acetyllysine (K48). An Orange domain is found at F86–L121.

The protein belongs to the HEY family. As to quaternary structure, self-associates. Interacts with HES5 and HEY2. As to expression, expressed in heart and testis.

The protein localises to the nucleus. Transcriptional repressor which binds preferentially to the canonical E box sequence 5'-CACGCG-3'. Required for the development of GABAergic neurons. The protein is Hairy and enhancer of split-related protein HELT (Helt) of Mus musculus (Mouse).